A 304-amino-acid polypeptide reads, in one-letter code: Ribosomal protein L11 methyltransferase (304 aa).

Positions 155, 176, 198, and 239 each coordinate S-adenosyl-L-methionine.

It belongs to the methyltransferase superfamily. PrmA family.

Its subcellular location is the cytoplasm. The enzyme catalyses L-lysyl-[protein] + 3 S-adenosyl-L-methionine = N(6),N(6),N(6)-trimethyl-L-lysyl-[protein] + 3 S-adenosyl-L-homocysteine + 3 H(+). Methylates ribosomal protein L11. The sequence is that of Ribosomal protein L11 methyltransferase from Caldicellulosiruptor bescii (strain ATCC BAA-1888 / DSM 6725 / KCTC 15123 / Z-1320) (Anaerocellum thermophilum).